We begin with the raw amino-acid sequence, 126 residues long: S-adenosylmethionine decarboxylase proenzyme (126 aa).

Ser63 functions as the Schiff-base intermediate with substrate; via pyruvic acid in the catalytic mechanism. The residue at position 63 (Ser63) is a Pyruvic acid (Ser); by autocatalysis. His68 acts as the Proton acceptor; for processing activity in catalysis. The active-site Proton donor; for catalytic activity is the Cys83.

This sequence belongs to the prokaryotic AdoMetDC family. Type 1 subfamily. As to quaternary structure, heterotetramer of two alpha and two beta chains arranged as a dimer of alpha/beta heterodimers. The cofactor is pyruvate. Post-translationally, is synthesized initially as an inactive proenzyme. Formation of the active enzyme involves a self-maturation process in which the active site pyruvoyl group is generated from an internal serine residue via an autocatalytic post-translational modification. Two non-identical subunits are generated from the proenzyme in this reaction, and the pyruvate is formed at the N-terminus of the alpha chain, which is derived from the carboxyl end of the proenzyme. The post-translation cleavage follows an unusual pathway, termed non-hydrolytic serinolysis, in which the side chain hydroxyl group of the serine supplies its oxygen atom to form the C-terminus of the beta chain, while the remainder of the serine residue undergoes an oxidative deamination to produce ammonia and the pyruvoyl group blocking the N-terminus of the alpha chain.

The enzyme catalyses S-adenosyl-L-methionine + H(+) = S-adenosyl 3-(methylsulfanyl)propylamine + CO2. The protein operates within amine and polyamine biosynthesis; S-adenosylmethioninamine biosynthesis; S-adenosylmethioninamine from S-adenosyl-L-methionine: step 1/1. Catalyzes the decarboxylation of S-adenosylmethionine to S-adenosylmethioninamine (dcAdoMet), the propylamine donor required for the synthesis of the polyamines spermine and spermidine from the diamine putrescine. This chain is S-adenosylmethionine decarboxylase proenzyme, found in Clostridium tetani (strain Massachusetts / E88).